A 542-amino-acid polypeptide reads, in one-letter code: CTP synthase (542 aa).

Positions 1 to 265 are amidoligase domain; that stretch reads MARYIFITGG…DDEVLAAFGL (265 aa). CTP is bound at residue Ser13. Ser13 contributes to the UTP binding site. 14 to 19 contacts ATP; it reads SLGKGL. Tyr54 contacts L-glutamine. Asp71 serves as a coordination point for ATP. Residues Asp71 and Glu139 each contribute to the Mg(2+) site. CTP-binding positions include 146 to 148, 186 to 191, and Lys222; these read DIE and KTKPTQ. UTP-binding positions include 186-191 and Lys222; that span reads KTKPTQ. 238-240 lines the ATP pocket; sequence RDA. The 252-residue stretch at 290 to 541 folds into the Glutamine amidotransferase type-1 domain; sequence TIAIVGKYTG…IQAAVVQSRL (252 aa). Gly352 is a binding site for L-glutamine. Cys379 serves as the catalytic Nucleophile; for glutamine hydrolysis. L-glutamine is bound by residues 380 to 383, Glu403, and Arg469; that span reads FGMQ. Active-site residues include His514 and Glu516.

The protein belongs to the CTP synthase family. Homotetramer.

The catalysed reaction is UTP + L-glutamine + ATP + H2O = CTP + L-glutamate + ADP + phosphate + 2 H(+). It carries out the reaction L-glutamine + H2O = L-glutamate + NH4(+). The enzyme catalyses UTP + NH4(+) + ATP = CTP + ADP + phosphate + 2 H(+). It participates in pyrimidine metabolism; CTP biosynthesis via de novo pathway; CTP from UDP: step 2/2. Its activity is regulated as follows. Allosterically activated by GTP, when glutamine is the substrate; GTP has no effect on the reaction when ammonia is the substrate. The allosteric effector GTP functions by stabilizing the protein conformation that binds the tetrahedral intermediate(s) formed during glutamine hydrolysis. Inhibited by the product CTP, via allosteric rather than competitive inhibition. Its function is as follows. Catalyzes the ATP-dependent amination of UTP to CTP with either L-glutamine or ammonia as the source of nitrogen. Regulates intracellular CTP levels through interactions with the four ribonucleotide triphosphates. The sequence is that of CTP synthase from Nitrobacter hamburgensis (strain DSM 10229 / NCIMB 13809 / X14).